A 253-amino-acid chain; its full sequence is Indole-3-glycerol phosphate synthase (253 aa).

This sequence belongs to the TrpC family.

It catalyses the reaction 1-(2-carboxyphenylamino)-1-deoxy-D-ribulose 5-phosphate + H(+) = (1S,2R)-1-C-(indol-3-yl)glycerol 3-phosphate + CO2 + H2O. It participates in amino-acid biosynthesis; L-tryptophan biosynthesis; L-tryptophan from chorismate: step 4/5. The polypeptide is Indole-3-glycerol phosphate synthase (Bacillus anthracis (strain A0248)).